A 511-amino-acid chain; its full sequence is cAMP-regulated M3L protein (511 aa).

It to D.discoideum protein M3R.

The chain is cAMP-regulated M3L protein (prtA) from Dictyostelium discoideum (Social amoeba).